We begin with the raw amino-acid sequence, 215 residues long: ATP phosphoribosyltransferase (215 aa).

This sequence belongs to the ATP phosphoribosyltransferase family. Short subfamily. In terms of assembly, heteromultimer composed of HisG and HisZ subunits.

Its subcellular location is the cytoplasm. It carries out the reaction 1-(5-phospho-beta-D-ribosyl)-ATP + diphosphate = 5-phospho-alpha-D-ribose 1-diphosphate + ATP. It participates in amino-acid biosynthesis; L-histidine biosynthesis; L-histidine from 5-phospho-alpha-D-ribose 1-diphosphate: step 1/9. Functionally, catalyzes the condensation of ATP and 5-phosphoribose 1-diphosphate to form N'-(5'-phosphoribosyl)-ATP (PR-ATP). Has a crucial role in the pathway because the rate of histidine biosynthesis seems to be controlled primarily by regulation of HisG enzymatic activity. The chain is ATP phosphoribosyltransferase (hisG) from Clostridium acetobutylicum (strain ATCC 824 / DSM 792 / JCM 1419 / IAM 19013 / LMG 5710 / NBRC 13948 / NRRL B-527 / VKM B-1787 / 2291 / W).